The chain runs to 319 residues: Cytochrome f (319 aa).

Residues 1 to 35 form the signal peptide; sequence MQNKDACKSLSSWVSLSISLLVLTVPLIWPYNSTA. Heme-binding residues include phenylalanine 36, cysteine 56, cysteine 59, and histidine 60. Residues 285–305 form a helical membrane-spanning segment; sequence IQGLLVFFASVILAQIFLVLK.

The protein belongs to the cytochrome f family. In terms of assembly, the 4 large subunits of the cytochrome b6-f complex are cytochrome b6, subunit IV (17 kDa polypeptide, petD), cytochrome f and the Rieske protein, while the 4 small subunits are PetG, PetL, PetM and PetN. The complex functions as a dimer. Requires heme as cofactor.

It is found in the plastid. The protein resides in the chloroplast thylakoid membrane. Component of the cytochrome b6-f complex, which mediates electron transfer between photosystem II (PSII) and photosystem I (PSI), cyclic electron flow around PSI, and state transitions. The chain is Cytochrome f from Staurastrum punctulatum (Green alga).